A 284-amino-acid chain; its full sequence is MHIFGKILGAFFGLLLGGPFGLLFGLFIGHQFDKARRLSQAGFSTGGFGKGPSQAQRQEEFFKAAFAVMGHVAKAKGQVTKEEIQLATAMMDRMNLHGEQRRAAQDAFREGKESDFPLEDVLVRVKISTAGRFDLLQFFLELQISAAFADGAIHPSERNVLHKIARGLGFSSEQLERRLQMQEAAFRFQHQGGFHGQQQGQYQSSGWQQASQADQLADAYKILDVSPEADGKTVKRAYRKLMNEHHPDKLMAKGLPPEMMNVAKEKSQEIQNAYDLIKKVKGFK.

At 1–6 (MHIFGK) the chain is on the periplasmic side. The chain crosses the membrane as a helical span at residues 7–30 (ILGAFFGLLLGGPFGLLFGLFIGH). At 31–284 (QFDKARRLSQ…DLIKKVKGFK (254 aa)) the chain is on the cytoplasmic side. One can recognise a J domain in the interval 218 to 284 (DAYKILDVSP…DLIKKVKGFK (67 aa)).

In terms of assembly, homodimer.

The protein localises to the cell inner membrane. In terms of biological role, regulatory DnaK co-chaperone. Direct interaction between DnaK and DjlA is needed for the induction of the wcaABCDE operon, involved in the synthesis of a colanic acid polysaccharide capsule, possibly through activation of the RcsB/RcsC phosphotransfer signaling pathway. The colanic acid capsule may help the bacterium survive conditions outside the host. In Vibrio parahaemolyticus serotype O3:K6 (strain RIMD 2210633), this protein is Co-chaperone protein DjlA.